Here is a 732-residue protein sequence, read N- to C-terminus: 1,4-alpha-glucan branching enzyme GlgB (732 aa).

The Nucleophile role is filled by Asp408. The active-site Proton donor is the Glu461.

This sequence belongs to the glycosyl hydrolase 13 family. GlgB subfamily. As to quaternary structure, monomer.

It catalyses the reaction Transfers a segment of a (1-&gt;4)-alpha-D-glucan chain to a primary hydroxy group in a similar glucan chain.. Its pathway is glycan biosynthesis; glycogen biosynthesis. Catalyzes the formation of the alpha-1,6-glucosidic linkages in glycogen by scission of a 1,4-alpha-linked oligosaccharide from growing alpha-1,4-glucan chains and the subsequent attachment of the oligosaccharide to the alpha-1,6 position. In Rhodococcus jostii (strain RHA1), this protein is 1,4-alpha-glucan branching enzyme GlgB.